Consider the following 159-residue polypeptide: Phosphoribosylaminoimidazole carboxylase (159 aa).

The substrate site is built by Ser-11, Asp-14, Ser-38, Lys-41, Gly-67, and Ser-69.

The enzyme catalyses 5-amino-1-(5-phospho-D-ribosyl)imidazole-4-carboxylate + H(+) = 5-amino-1-(5-phospho-beta-D-ribosyl)imidazole + CO2. It functions in the pathway purine metabolism; IMP biosynthesis via de novo pathway; 5-amino-1-(5-phospho-D-ribosyl)imidazole-4-carboxylate from 5-amino-1-(5-phospho-D-ribosyl)imidazole (carboxylase route): step 1/1. Its function is as follows. Catalyzes the reversible conversion of 5-aminoimidazole ribonucleotide (AIR) and CO(2) to 4-carboxy-5-aminoimidazole ribonucleotide (CAIR). Does not accept N5-carboxyaminoimidazole ribonucleotide (N5-CAIR) as a substrate. This is Phosphoribosylaminoimidazole carboxylase from Treponema denticola (strain ATCC 35405 / DSM 14222 / CIP 103919 / JCM 8153 / KCTC 15104).